The chain runs to 448 residues: Trigger factor (448 aa).

A PPIase FKBP-type domain is found at 172–257 (GDRVTVDFVG…MKKIEWPHLP (86 aa)).

It belongs to the FKBP-type PPIase family. Tig subfamily.

The protein localises to the cytoplasm. The enzyme catalyses [protein]-peptidylproline (omega=180) = [protein]-peptidylproline (omega=0). Functionally, involved in protein export. Acts as a chaperone by maintaining the newly synthesized protein in an open conformation. Functions as a peptidyl-prolyl cis-trans isomerase. The chain is Trigger factor from Paraburkholderia phymatum (strain DSM 17167 / CIP 108236 / LMG 21445 / STM815) (Burkholderia phymatum).